The chain runs to 528 residues: MSEPTTTPVVGNSASGDSAEQHDLGQKRGKGGNWNRPRGDHQAKKQKMDRRGDRQREQEKQGEGRDTRRKTDGPLVADEVRQPKRKVACMIGYCGTGYHGMQLNPPQKTIEGDIFQAFVKAGAISQNNADDPKKSAFMRAARTDKGVHAAGNVISLKMIIEDENIVEKINSHLPEQLRVWGVSRTNKAFECRKLCSSRVYEYLMPTYSFLNPRPGTVMSEKLLKDGTSPDEEGKKYWESVAADLESQGVSYDEWMKRACIDEIKGEETKEVAESEVKTDSKTDAATLEKIKAVERRHREEFRISGERLAKIREILKIYEGTHNFHNFTLGKAFKDPSAMRTMKSLTCSDPFLIDGTEWVSIKIHGQSFMLHQIRKMISMVALSVRCNADPQKLIPQTFEKARINIPKAPALGLLLERPVYDSYNKKLQGEFGREGVHFDNWNDQIEAFKHKFIYDKIYAEEKGQHVFHAFFSFVDVFTGDASFDFLLKQGITKECTTDYMNKKAKEEGKEIKKLEEDDDEVANEQNEG.

Positions 1-18 are enriched in polar residues; it reads MSEPTTTPVVGNSASGDS. The interval 1-80 is disordered; sequence MSEPTTTPVV…TDGPLVADEV (80 aa). The span at 49–80 shows a compositional bias: basic and acidic residues; it reads DRRGDRQREQEKQGEGRDTRRKTDGPLVADEV. Catalysis depends on Asp-144, which acts as the Nucleophile. Residues 505-515 show a composition bias toward basic and acidic residues; sequence KEEGKEIKKLE. The tract at residues 505 to 528 is disordered; the sequence is KEEGKEIKKLEEDDDEVANEQNEG. Over residues 516-528 the composition is skewed to acidic residues; it reads EDDDEVANEQNEG.

This sequence belongs to the tRNA pseudouridine synthase TruA family. Requires Zn(2+) as cofactor.

The protein resides in the nucleus. The enzyme catalyses a uridine in tRNA = a pseudouridine in tRNA. It carries out the reaction uridine in snRNA = pseudouridine in snRNA. The catalysed reaction is a uridine in mRNA = a pseudouridine in mRNA. Formation of pseudouridine at positions 27 and 28 in the anticodon stem and loop of transfer RNAs; at positions 34 and 36 of intron-containing precursor tRNA(Ile) and at position 35 in the intron-containing tRNA(Tyr). Catalyzes pseudouridylation at position 44 in U2 snRNA. Also catalyzes pseudouridylation of mRNAs. This Yarrowia lipolytica (strain CLIB 122 / E 150) (Yeast) protein is tRNA pseudouridine synthase 1 (PUS1).